The following is a 249-amino-acid chain: Isoprenyl transferase (249 aa).

D25 is a catalytic residue. D25 provides a ligand contact to Mg(2+). Residues 26–29 (GNGR), W30, R38, H42, and 70–72 (STE) each bind substrate. Catalysis depends on N73, which acts as the Proton acceptor. Substrate contacts are provided by residues W74, R76, R197, and 203 to 205 (RLS). Position 216 (E216) interacts with Mg(2+).

This sequence belongs to the UPP synthase family. In terms of assembly, homodimer. Mg(2+) serves as cofactor.

Functionally, catalyzes the condensation of isopentenyl diphosphate (IPP) with allylic pyrophosphates generating different type of terpenoids. This Streptococcus pyogenes serotype M6 (strain ATCC BAA-946 / MGAS10394) protein is Isoprenyl transferase.